The sequence spans 725 residues: MPVSTRSKVMKQERNEQENTNLNLPLRNPHQGLKEKMRALTLLYEQQKRASFSLRNPNHNQSPKPEDQRFKTQLLDSSKKGDRFHRLDGKDSTFVEEDTKENNVFEADRIFGVSSVPVKPSGVIRKLSMGNGARNVSEAEKLESLNASVSRILVFVRLRPMGKKERENGSRCCVKVLNKRDVYLTEFTNENDYLRLKRLRVRHFTFDSSFPETTTQQEVYSTTTGDLVEAVLEGRNGSVFCYGATGAGKTYTMLGTMENPGVMVLAIKDLFAKVRQRSLDGNHVVHLSYLEVYNETVRDLLSPGRPLILREDKQGIVAAGLTQYRAYSTDEVMALLQRGNQNRTTEPTRCNETSSRSHAILQVIVEYKTRDASMNIISRVGKLSLIDLAGSERALATDQRTLRSLEGANINRSLLALSSCINALVEGKKHIPYRNSKLTQLLKDSLGGSCNTVMIANISPSSQSFGETQNTLHWADRAKEIRVKECEVNEEVVQVGEEEGADQAKLLLELQKENSELRVQLAKQQQKLLTLQAENIAAANNNNNISLTPPSISSLMTPPSALTAQQKKKPRHSLLSGTCFTPESLKRTKAEEAVKELQLTVKALKMEMERMKREHGLQMKKQKDELMKDLCSRKSEKTPERCKETRRIVTRGSLRPKEKEKELKSPSHRFASPVAAAKKRSFWDITVANTSPALDRRKTRSHGLVHQEAPSKLLQPGFARPHMKH.

The tract at residues 1–32 (MPVSTRSKVMKQERNEQENTNLNLPLRNPHQG) is disordered. The region spanning 151–481 (RILVFVRLRP…LHWADRAKEI (331 aa)) is the Kinesin motor domain. 243-250 (GATGAGKT) provides a ligand contact to ATP. Coiled coils occupy residues 499–541 (EGAD…AANN) and 583–617 (ESLK…EHGL). Disordered regions lie at residues 652-672 (GSLR…RFAS) and 691-725 (SPAL…HMKH). Residues 655–665 (RPKEKEKELKS) are compositionally biased toward basic and acidic residues.

It belongs to the TRAFAC class myosin-kinesin ATPase superfamily. Kinesin family. KIN-8 subfamily.

The protein is Kinesin-like protein KIN-8A of Arabidopsis thaliana (Mouse-ear cress).